The primary structure comprises 347 residues: Putative coenzyme F420-dependent oxidoreductase Rv3520c (347 aa).

The polypeptide is Putative coenzyme F420-dependent oxidoreductase Rv3520c (Mycobacterium tuberculosis (strain ATCC 25618 / H37Rv)).